The sequence spans 226 residues: Aspartyl protease inhibitor (226 aa).

A signal peptide spans 1-15 (MKLLFLCALIALTAA). 2 disordered regions span residues 95–116 (GKKGKAVETSSEELPKAPKKPS) and 196–218 (EAKQTTTTEAPELPEEAPEQPNV). C131 and C222 are joined by a disulfide.

Belongs to the protease inhibitor I33 family.

It is found in the secreted. Functionally, aspartyl protease inhibitor. The chain is Aspartyl protease inhibitor from Parelaphostrongylus tenuis (Meningeal worm).